Here is a 226-residue protein sequence, read N- to C-terminus: Leucyl/phenylalanyl-tRNA--protein transferase (226 aa).

This sequence belongs to the L/F-transferase family.

It localises to the cytoplasm. It catalyses the reaction N-terminal L-lysyl-[protein] + L-leucyl-tRNA(Leu) = N-terminal L-leucyl-L-lysyl-[protein] + tRNA(Leu) + H(+). The enzyme catalyses N-terminal L-arginyl-[protein] + L-leucyl-tRNA(Leu) = N-terminal L-leucyl-L-arginyl-[protein] + tRNA(Leu) + H(+). The catalysed reaction is L-phenylalanyl-tRNA(Phe) + an N-terminal L-alpha-aminoacyl-[protein] = an N-terminal L-phenylalanyl-L-alpha-aminoacyl-[protein] + tRNA(Phe). Its function is as follows. Functions in the N-end rule pathway of protein degradation where it conjugates Leu, Phe and, less efficiently, Met from aminoacyl-tRNAs to the N-termini of proteins containing an N-terminal arginine or lysine. This is Leucyl/phenylalanyl-tRNA--protein transferase from Pseudomonas putida (strain W619).